We begin with the raw amino-acid sequence, 293 residues long: Formamidopyrimidine-DNA glycosylase (293 aa).

The active-site Schiff-base intermediate with DNA is Pro2. The active-site Proton donor is the Glu3. The Proton donor; for beta-elimination activity role is filled by Lys58. DNA contacts are provided by His104, Arg123, and Arg166. The segment at 257–293 (AVYDREGEPCRSKGCDGVVKRFVQNGRSTFWCPKCQK) adopts an FPG-type zinc-finger fold. Arg283 acts as the Proton donor; for delta-elimination activity in catalysis.

This sequence belongs to the FPG family. Monomer. Zn(2+) serves as cofactor.

The enzyme catalyses Hydrolysis of DNA containing ring-opened 7-methylguanine residues, releasing 2,6-diamino-4-hydroxy-5-(N-methyl)formamidopyrimidine.. The catalysed reaction is 2'-deoxyribonucleotide-(2'-deoxyribose 5'-phosphate)-2'-deoxyribonucleotide-DNA = a 3'-end 2'-deoxyribonucleotide-(2,3-dehydro-2,3-deoxyribose 5'-phosphate)-DNA + a 5'-end 5'-phospho-2'-deoxyribonucleoside-DNA + H(+). Involved in base excision repair of DNA damaged by oxidation or by mutagenic agents. Acts as a DNA glycosylase that recognizes and removes damaged bases. Has a preference for oxidized purines, such as 7,8-dihydro-8-oxoguanine (8-oxoG). Has AP (apurinic/apyrimidinic) lyase activity and introduces nicks in the DNA strand. Cleaves the DNA backbone by beta-delta elimination to generate a single-strand break at the site of the removed base with both 3'- and 5'-phosphates. The sequence is that of Formamidopyrimidine-DNA glycosylase from Rhodopseudomonas palustris (strain BisB18).